The chain runs to 356 residues: Histidinol-phosphate aminotransferase (356 aa).

Lys210 is modified (N6-(pyridoxal phosphate)lysine).

It belongs to the class-II pyridoxal-phosphate-dependent aminotransferase family. Histidinol-phosphate aminotransferase subfamily. As to quaternary structure, homodimer. Pyridoxal 5'-phosphate is required as a cofactor.

It carries out the reaction L-histidinol phosphate + 2-oxoglutarate = 3-(imidazol-4-yl)-2-oxopropyl phosphate + L-glutamate. Its pathway is amino-acid biosynthesis; L-histidine biosynthesis; L-histidine from 5-phospho-alpha-D-ribose 1-diphosphate: step 7/9. This chain is Histidinol-phosphate aminotransferase (hisC), found in Acetobacter pasteurianus (Acetobacter turbidans).